The chain runs to 254 residues: Precorrin-3B C(17)-methyltransferase (254 aa).

Belongs to the precorrin methyltransferase family.

It catalyses the reaction precorrin-3B + S-adenosyl-L-methionine = precorrin-4 + S-adenosyl-L-homocysteine + 3 H(+). It functions in the pathway cofactor biosynthesis; adenosylcobalamin biosynthesis; cob(II)yrinate a,c-diamide from precorrin-2 (aerobic route): step 3/10. In terms of biological role, methyltransferase that catalyzes the methylation of C-17 in precorrin-3B to form precorrin-4. The protein is Precorrin-3B C(17)-methyltransferase (cobJ) of Sinorhizobium sp.